Consider the following 1761-residue polypeptide: Nonribosomal peptide synthetase 6 (1761 aa).

Residues 63 to 468 are adenylation; the sequence is ERAALHPEKI…GRQDQQVKLR (406 aa). In terms of domain architecture, Carrier 1 spans 600–675; sequence EATTEMELKL…AMAEKAKPVS (76 aa). Ser636 bears the O-(pantetheine 4'-phosphoryl)serine mark. Residues 712-1135 are condensation 1; that stretch reads VEDVYPCTPL…AVLDPAEARD (424 aa). Carrier domains are found at residues 1169–1242 and 1237–1313; these read SPNE…SNER and SASN…EEEM. O-(pantetheine 4'-phosphoryl)serine occurs at positions 1203 and 1274. The segment at 1354–1677 is condensation 2; the sequence is IYPTRPLQQL…DKVQWFDTVV (324 aa).

It belongs to the NRP synthetase family.

It functions in the pathway siderophore biosynthesis. In terms of biological role, NRPS involved in extracellular coprogen-type siderophores biosynthesis including coprogen, neocoprogen I and neocoprogen II. The role of extracellular siderophores in fungal virulence to plants is to supply iron to the fungus during plant infection, but not to act as phytotoxins, depriving their hosts of iron. This Cochliobolus miyabeanus (Brown spot disease fungus) protein is Nonribosomal peptide synthetase 6.